The following is a 607-amino-acid chain: Arginine--tRNA ligase (607 aa).

The 'HIGH' region motif lies at 147 to 157 (PNIAKEMHVGH).

Belongs to the class-I aminoacyl-tRNA synthetase family. As to quaternary structure, monomer.

The protein resides in the cytoplasm. The enzyme catalyses tRNA(Arg) + L-arginine + ATP = L-arginyl-tRNA(Arg) + AMP + diphosphate. The chain is Arginine--tRNA ligase from Prochlorococcus marinus (strain NATL2A).